We begin with the raw amino-acid sequence, 509 residues long: Maturase K (509 aa).

This sequence belongs to the intron maturase 2 family. MatK subfamily.

It is found in the plastid. It localises to the chloroplast. In terms of biological role, usually encoded in the trnK tRNA gene intron. Probably assists in splicing its own and other chloroplast group II introns. This is Maturase K from Vatairea macrocarpa.